A 199-amino-acid polypeptide reads, in one-letter code: Recombination protein RecR (199 aa).

The segment at 56 to 71 (CATCGNVAQEEQCNIC) adopts a C4-type zinc-finger fold. Positions 79–174 (SVICVVEEPK…KVTRLASGLP (96 aa)) constitute a Toprim domain.

It belongs to the RecR family.

Functionally, may play a role in DNA repair. It seems to be involved in an RecBC-independent recombinational process of DNA repair. It may act with RecF and RecO. The protein is Recombination protein RecR of Streptomyces coelicolor (strain ATCC BAA-471 / A3(2) / M145).